A 440-amino-acid chain; its full sequence is Guanine/hypoxanthine permease PbuG (440 aa).

The next 13 helical transmembrane spans lie at 18 to 38, 57 to 77, 81 to 101, 107 to 127, 142 to 162, 175 to 195, 201 to 221, 251 to 271, 291 to 311, 327 to 347, 354 to 374, 388 to 408, and 419 to 439; these read IIGGLTTFLSMAYILFVNPIT, AVFTATALASAAGCILMGLIA, IAIAPGMGLNAFFAFSVVLGM, AALSGVFISGLIFVALSLTGF, AVGAGIGLFITFVGLQGSGII, IHSGPVLLTIFGVIVTVILMV, GVFIGMLLTAVAGMIFGLVPV, MLIVILTFLFVGFFDTAGTLV, ALLADSSSIVIGAVLGTSTTT, GFAAIVTGILFLLATFFSPLL, VTAPALIIVGALMVAPLGKIA, MIMMPLTYSIATGIAIGFIFY, and KEVHPIMYGLFVVFILYFIFL.

It belongs to the nucleobase:cation symporter-2 (NCS2) (TC 2.A.40) family. Azg-like subfamily.

The protein localises to the cell membrane. In terms of biological role, involved in the uptake of the purine bases hypoxanthine and guanine. This is Guanine/hypoxanthine permease PbuG (pbuG) from Bacillus subtilis (strain 168).